Consider the following 230-residue polypeptide: CRP-like protein Clp (230 aa).

18–139 (PSLALDAGTI…APKILYAIGV (122 aa)) is an a nucleoside 3',5'-cyclic phosphate binding site. The region spanning 158 to 230 (LDVTDRIVRT…GKTVVLYGTR (73 aa)) is the HTH crp-type domain. A DNA-binding region (H-T-H motif) is located at residues 190 to 209 (RQELARLVGCSREMAGRVLK).

As to quaternary structure, homodimer.

It localises to the cytoplasm. Allosterically inhibited by cyclic di-GMP (c-di-GMP), which binds to Clp and abolishes its ability to bind its target gene promoter. Global transcriptional regulator that regulates virulence factors production by activating or repressing the expression of a large set of genes in diffusible signal factor (DSF) pathway. In Xanthomonas oryzae pv. oryzae (strain MAFF 311018), this protein is CRP-like protein Clp (clp).